Reading from the N-terminus, the 228-residue chain is UPF0758 protein RALTA_A2508 (228 aa).

The 123-residue stretch at 102 to 224 folds into the MPN domain; that stretch reads GFDSPDSVRS…IRSLAESCER (123 aa). The Zn(2+) site is built by histidine 173, histidine 175, and aspartate 186. The JAMM motif signature appears at 173–186; sequence HNHPRGTTAPSQSD.

This sequence belongs to the UPF0758 family.

This Cupriavidus taiwanensis (strain DSM 17343 / BCRC 17206 / CCUG 44338 / CIP 107171 / LMG 19424 / R1) (Ralstonia taiwanensis (strain LMG 19424)) protein is UPF0758 protein RALTA_A2508.